A 658-amino-acid polypeptide reads, in one-letter code: UvrABC system protein B (658 aa).

A Helicase ATP-binding domain is found at 26-413 (EGINSGKKKQ…SPEVIEQIIR (388 aa)). Position 39–46 (39–46 (GATGTGKT)) interacts with ATP. The Beta-hairpin motif lies at 92–115 (YYDYYQPEAYVPQTDTFIEKDAQI). In terms of domain architecture, Helicase C-terminal spans 430 to 596 (QIDDLLGEIQ…TIQKGVRDVI (167 aa)). The 36-residue stretch at 622-657 (EKTIAKMEAEMKEAAKALDFERAAELRDLLLELKAE) folds into the UVR domain.

Belongs to the UvrB family. In terms of assembly, forms a heterotetramer with UvrA during the search for lesions. Interacts with UvrC in an incision complex.

It localises to the cytoplasm. Its function is as follows. The UvrABC repair system catalyzes the recognition and processing of DNA lesions. A damage recognition complex composed of 2 UvrA and 2 UvrB subunits scans DNA for abnormalities. Upon binding of the UvrA(2)B(2) complex to a putative damaged site, the DNA wraps around one UvrB monomer. DNA wrap is dependent on ATP binding by UvrB and probably causes local melting of the DNA helix, facilitating insertion of UvrB beta-hairpin between the DNA strands. Then UvrB probes one DNA strand for the presence of a lesion. If a lesion is found the UvrA subunits dissociate and the UvrB-DNA preincision complex is formed. This complex is subsequently bound by UvrC and the second UvrB is released. If no lesion is found, the DNA wraps around the other UvrB subunit that will check the other stand for damage. The polypeptide is UvrABC system protein B (Bacillus cereus (strain ZK / E33L)).